The primary structure comprises 127 residues: Large ribosomal subunit protein bL20 (127 aa).

Belongs to the bacterial ribosomal protein bL20 family.

Its function is as follows. Binds directly to 23S ribosomal RNA and is necessary for the in vitro assembly process of the 50S ribosomal subunit. It is not involved in the protein synthesizing functions of that subunit. The sequence is that of Large ribosomal subunit protein bL20 from Bifidobacterium adolescentis (strain ATCC 15703 / DSM 20083 / NCTC 11814 / E194a).